Reading from the N-terminus, the 377-residue chain is Meiotic driver cw9 (377 aa).

Disordered regions lie at residues 1–49 (MKNK…DLNN) and 64–100 (NKSTTPPDYDENRLPITDEGNNPPNTHRENHSSGTTD). The segment covering 11-29 (SMDEMSAKNDNEIDLEKGP) has biased composition (basic and acidic residues). The next 7 helical transmembrane spans lie at 105–125 (FLIKLLISFTSIILFNAPAVC), 142–162 (WTLFGFWCLVCTLALLFLTYF), 172–192 (VTIIFLAQCIKVTAVFLAQCV), 218–238 (VVIIWLLWVVICYTLFLRSKF), 252–272 (CSISAALLLFLLYVRLPFWTL), 276–296 (FSGLFQVLGVQSCVVIVTKGL), and 306–326 (ATGYEIEVSSLFVIGNFLFFY).

Belongs to the WTF family. As to quaternary structure, homomer. Forms protein aggregates. The two isoforms can interact with each other and with themselves. High sequence similarity is required for their interaction.

The protein localises to the spore membrane. The protein resides in the vacuole membrane. It is found in the ascus epiplasm. Its subcellular location is the cytoplasm. It localises to the endoplasmic reticulum membrane. Functionally, promotes unequal transmission of alleles from the parental zygote to progeny spores by acting as poison/antidote system where the poison and antidote proteins are produced from the same locus; the poison component is trans-acting and targets all spores within an ascus whereas the antidote component is spore-specific, leading to poisoning of all progeny that do not inherit the allele. In terms of biological role, localizes isoform 2 to the vacuole thereby facilitating its degradation. Forms toxic aggregates that disrupt spore maturation. The protein is Meiotic driver cw9 of Schizosaccharomyces pombe (Fission yeast).